Consider the following 37-residue polypeptide: Large ribosomal subunit protein bL36A (37 aa).

Belongs to the bacterial ribosomal protein bL36 family.

This Actinobacillus pleuropneumoniae serotype 5b (strain L20) protein is Large ribosomal subunit protein bL36A.